The primary structure comprises 970 residues: Protein tweety (970 aa).

The Extracellular segment spans residues 1-47 (MGDYHEFTDQYKVPVIAKLLHALPHYNITFHKINSTFRPNDEIYLES). 2 N-linked (GlcNAc...) asparagine glycosylation sites follow: Asn-27 and Asn-34. A helical membrane pass occupies residues 48-68 (LGILGSVPAALLIVSLLGLLF). Residues 69-89 (YLMTRCCDRKPRPAHSITSLK) are Cytoplasmic-facing. Residues 90-110 (VALSIVTVMCCAAIGLGLYGN) traverse the membrane as a helical segment. Residues 111-219 (DDLHNGLLEV…GDQWELIRWP (109 aa)) lie on the Extracellular side of the membrane. Residues Asn-136, Asn-166, and Asn-183 are each glycosylated (N-linked (GlcNAc...) asparagine). The chain crosses the membrane as a helical span at residues 220–240 (GTVATLALLLVLCAVLLVGVA). The Cytoplasmic portion of the chain corresponds to 241–246 (RHSRCA). Residues 247–267 (LILFSVCGLLAVTGSWLMSGL) traverse the membrane as a helical segment. Residues 268 to 395 (YLSSSVAVGD…RGLCEGGLLG (128 aa)) are Extracellular-facing. Residue Asn-359 is glycosylated (N-linked (GlcNAc...) asparagine). The helical transmembrane segment at 396–416 (LVLMLIASFIAAILLTIMVWV) threads the bilayer. Topologically, residues 417 to 970 (DSHTWIYIRK…DESNYAVTEL (554 aa)) are cytoplasmic. The span at 532-571 (NAAANMPPTTQAAQQQQQQQAQQQQQQAQQQLGGPQPIYC) shows a compositional bias: low complexity. 3 disordered regions span residues 532 to 587 (NAAA…QHPH), 677 to 763 (RQNS…NESD), and 849 to 970 (MKAI…VTEL). Residues 572–587 (HHPHQHPHPHPHQHPH) show a composition bias toward basic residues. 3 stretches are compositionally biased toward low complexity: residues 689-700 (HQHPPSLHQQQQ), 707-737 (QQQQ…QQHH), and 745-759 (QHQQ…QQQP). A compositionally biased stretch (pro residues) spans 852–868 (IPPPRIGTPTSPPPPVA). Gly residues-rich tracts occupy residues 883-894 (QNGGAVVGGGGA) and 931-945 (NGGG…GGGA). Residues 961-970 (DESNYAVTEL) show a composition bias toward polar residues.

It belongs to the tweety family.

It is found in the cell membrane. In terms of biological role, non-essential protein that probably acts as a chloride channel. The polypeptide is Protein tweety (tty) (Drosophila melanogaster (Fruit fly)).